The sequence spans 368 residues: DNA replication and repair protein RecF (368 aa).

30 to 37 (GDNGAGKT) lines the ATP pocket.

The protein belongs to the RecF family.

The protein resides in the cytoplasm. Functionally, the RecF protein is involved in DNA metabolism; it is required for DNA replication and normal SOS inducibility. RecF binds preferentially to single-stranded, linear DNA. It also seems to bind ATP. This is DNA replication and repair protein RecF from Xanthomonas oryzae pv. oryzae (strain KACC10331 / KXO85).